The sequence spans 420 residues: Protein MucB (420 aa).

Positions 2–187 constitute a UmuC domain; that stretch reads FALIDVNGMY…LPVAEVWGVG (186 aa).

It belongs to the DNA polymerase type-Y family.

Involved in UV protection and mutation. This chain is Protein MucB (mucB), found in Escherichia coli.